The sequence spans 497 residues: MDASSVPPKVDDYGMYTTEISHHNPIELKNLLSSSDSRRNSQDEDSLPNNTNLIKEIDWQGEKVKTYPLNYQTVPLVKLQVIACLIMFVVFGMNDQTVGALLPTLIEYYHISRVDVSNVFIVQLCGYVMASLSKERLNKHFGMRGGMLLAAGLCIVFLIILATAPSSFYVCMFCGLPLGLGIGILDSTGNVLMGSLLVHKNELMGIMHGLYGAAAMVTPPLVSYFVEWGHWSLFFLIPLFFSIIGMIVIFPAFKFETASKYDYLCSVENKESNNDVEEAGDNSLMESTKASPGFFELLRNPAIFLYSLYLFLYLGAEITTGSWFFSYLLETKSSNKVAMSYIAASFWTGLTVGRLCLGFVTERFFENEYKASKAYAFLTLSSYTLFVLVGLINSSSVFYFVVLFFVVFCCGTFIGPLFPNASIVALQVLPKRLHVSGVGVAVAVGGCGGAAIPYLAGVIAHTVGIQYIPLLCWIMVALFTLEWTLYPKFIKGHEEYF.

The Lumenal portion of the chain corresponds to M1 to Q72. 2 positions are modified to phosphoserine: S37 and S41. N49 is a glycosylation site (N-linked (GlcNAc...) asparagine). Residues T73–M93 traverse the membrane as a helical segment. The Cytoplasmic portion of the chain corresponds to N94 to R144. Residues G145–P165 traverse the membrane as a helical segment. The Lumenal portion of the chain corresponds to S166–S167. The chain crosses the membrane as a helical span at residues F168 to T188. Over G189–G205 the chain is Cytoplasmic. The helical transmembrane segment at I206 to V226 threads the bilayer. The Lumenal portion of the chain corresponds to E227 to S232. A helical transmembrane segment spans residues L233–F253. Residues K254–N300 lie on the Cytoplasmic side of the membrane. Residues P301–G321 traverse the membrane as a helical segment. The Lumenal segment spans residues S322–S340. Residues Y341–T361 traverse the membrane as a helical segment. Topologically, residues E362–K373 are cytoplasmic. Residues A374–S394 form a helical membrane-spanning segment. The Lumenal segment spans residues S395 to V397. A helical transmembrane segment spans residues F398–F418. At P419–G439 the chain is on the cytoplasmic side. Residues V440–A460 form a helical membrane-spanning segment. At H461–T462 the chain is on the lumenal side. Residues V463–W483 form a helical membrane-spanning segment. Residues T484–F497 are Cytoplasmic-facing.

Belongs to the major facilitator superfamily.

The protein resides in the golgi apparatus. It is found in the cis-Golgi network membrane. Functionally, probable transporter. This is Bypass of stop codon protein 6 (BSC6) from Saccharomyces cerevisiae (strain ATCC 204508 / S288c) (Baker's yeast).